Here is a 204-residue protein sequence, read N- to C-terminus: Golgi to ER traffic protein 1 (204 aa).

The Lumenal portion of the chain corresponds to 1–11 (MLTLDIDPYTI). The chain crosses the membrane as a helical span at residues 12–31 (LVTSFLILAIQKLVTVIGKQ). Topologically, residues 32-116 (KIQLYIWQIY…RIDSITKLAI (85 aa)) are cytoplasmic. The stretch at 78–113 (AKWTKINRALDKLKLEVQELNETIAGEKTRIDSITK) forms a coiled coil. Residues 117–137 (TLILTLPIWFLRIFCRKTALL) form a helical membrane-spanning segment. The Lumenal segment spans residues 138 to 161 (YIRKGILPAYLEWWLALPFFKSGT). A helical transmembrane segment spans residues 162 to 178 (IGLTCWMFVVNSVLSNL). The Cytoplasmic portion of the chain corresponds to 179–204 (IFLISFPFTQKVERPIKPKNEQKTES).

It belongs to the WRB/GET1 family. As to quaternary structure, component of the Golgi to ER traffic (GET) complex, which is composed of GET1, GET2 and GET3. Within the complex, GET1 and GET2 form a heterotetramer which is stabilized by phosphatidylinositol binding and which binds to the GET3 homodimer.

The protein localises to the endoplasmic reticulum membrane. The protein resides in the golgi apparatus membrane. Functionally, required for the post-translational delivery of tail-anchored (TA) proteins to the endoplasmic reticulum. Together with GET2, acts as a membrane receptor for soluble GET3, which recognizes and selectively binds the transmembrane domain of TA proteins in the cytosol. The GET complex cooperates with the HDEL receptor ERD2 to mediate the ATP-dependent retrieval of resident ER proteins that contain a C-terminal H-D-E-L retention signal from the Golgi to the ER. In Lodderomyces elongisporus (strain ATCC 11503 / CBS 2605 / JCM 1781 / NBRC 1676 / NRRL YB-4239) (Yeast), this protein is Golgi to ER traffic protein 1.